The sequence spans 480 residues: Iroquois-class homeodomain protein IRX-1 (480 aa).

A DNA-binding region (homeobox; TALE-type) is located at residues 127-189 (DPGRPKNATR…NARRRLKKEN (63 aa)). Disordered stretches follow at residues 190–285 (KVTW…LGLV), 318–354 (SLAE…PLQH), and 401–480 (PHGP…LPSA). Over residues 210 to 232 (TEGDPEKAEDDEEIDLESIDIDQ) the composition is skewed to acidic residues. Residue Ser241 is modified to Phosphoserine. Residues 254–263 (ARVAPPASAR) show a composition bias toward low complexity. The segment covering 264-280 (DQSSPLSAAETLKSQDS) has biased composition (polar residues). Over residues 339–351 (SHASAHGPPSGSP) the composition is skewed to low complexity.

The protein belongs to the TALE/IRO homeobox family. In terms of tissue distribution, expressed in specific and overlapping patterns with Irx1 and Irx2 in the developing and adult metanephric kidney. In the adult metanephros, renal expression is found in the loop of Henle in the S3 proximal tubule segment and in the thick ascending limb (TAL) of the distal tubule.

Its subcellular location is the nucleus. This Mus musculus (Mouse) protein is Iroquois-class homeodomain protein IRX-1 (Irx1).